The chain runs to 276 residues: Diaminopimelate epimerase (276 aa).

Residues Asn-13, Gln-46, and Asn-66 each contribute to the substrate site. The active-site Proton donor is Cys-75. Substrate contacts are provided by residues 76–77, Asn-159, Asn-192, and 210–211; these read GN and ER. Cys-219 serves as the catalytic Proton acceptor. 220–221 is a binding site for substrate; the sequence is GT.

Belongs to the diaminopimelate epimerase family. In terms of assembly, homodimer.

It localises to the cytoplasm. It catalyses the reaction (2S,6S)-2,6-diaminopimelate = meso-2,6-diaminopimelate. It participates in amino-acid biosynthesis; L-lysine biosynthesis via DAP pathway; DL-2,6-diaminopimelate from LL-2,6-diaminopimelate: step 1/1. Its function is as follows. Catalyzes the stereoinversion of LL-2,6-diaminopimelate (L,L-DAP) to meso-diaminopimelate (meso-DAP), a precursor of L-lysine and an essential component of the bacterial peptidoglycan. This Ectopseudomonas mendocina (strain ymp) (Pseudomonas mendocina) protein is Diaminopimelate epimerase.